A 262-amino-acid chain; its full sequence is Phosphatidylglycerol--prolipoprotein diacylglyceryl transferase (262 aa).

A run of 4 helical transmembrane segments spans residues 9-29 (LGPL…ILAV), 41-61 (IIPD…ILGA), 80-100 (IFAI…GALV), and 109-129 (LINT…AQSL). Arginine 131 lines the a 1,2-diacyl-sn-glycero-3-phospho-(1'-sn-glycerol) pocket. Helical transmembrane passes span 167–187 (QPTF…ILIF), 197–217 (GHIT…IEGM), and 226–246 (GLRV…MIVI).

It belongs to the Lgt family.

The protein resides in the cell membrane. It carries out the reaction L-cysteinyl-[prolipoprotein] + a 1,2-diacyl-sn-glycero-3-phospho-(1'-sn-glycerol) = an S-1,2-diacyl-sn-glyceryl-L-cysteinyl-[prolipoprotein] + sn-glycerol 1-phosphate + H(+). It functions in the pathway protein modification; lipoprotein biosynthesis (diacylglyceryl transfer). Functionally, catalyzes the transfer of the diacylglyceryl group from phosphatidylglycerol to the sulfhydryl group of the N-terminal cysteine of a prolipoprotein, the first step in the formation of mature lipoproteins. The protein is Phosphatidylglycerol--prolipoprotein diacylglyceryl transferase of Streptococcus pneumoniae (strain ATCC 700669 / Spain 23F-1).